The sequence spans 737 residues: MADTQYILPNDIGVSSLDCREAFRLLSPTERLYAYHLSRAAWYGGLAVLLQTSPEAPYIYALLSRLFRAQDPDQLRQHALAEGLTEEEYQAFLVYAAGVYSNMGNYKSFGDTKFVPNLPKEKLERVILGSEAAQQHPEEVRGLWQTCGELMFSLEPRLRHLGLGKEGITTYFSGNCTMEDAKLAQDFLDSQNLSAYNTRLFKEVDGEGKPYYEVRLASVLGSEPSLDSEVTSKLKSYEFRGSPFQVTRGDYAPILQKVVEQLEKAKAYAANSHQGQMLAQYIESFTQGSIEAHKRGSRFWIQDKGPIVESYIGFIESYRDPFGSRGEFEGFVAVVNKAMSAKFERLVASAEQLLKELPWPPTFEKDKFLTPDFTSLDVLTFAGSGIPAGINIPNYDDLRQTEGFKNVSLGNVLAVAYATQREKLTFLEEDDKDLYILWKGPSFDVQVGLHELLGHGSGKLFVQDEKGAFNFDQETVINPETGEQIQSWYRSGETWDSKFSTIASSYEECRAESVGLYLCLHPQVLEIFGFEGADAEDVIYVNWLNMVRAGLLALEFYTPEAFNWRQAHMQARFVILRVLLEAGEGLVTITPTTGSDGRPDARVRLDRSKIRSVGKPALERFLRRLQVLKSTGDVAGGRALYEGYATVTDAPPECFLTLRDTVLLRKESRKLIVQPNTRLEGSDVQLLEYEASAAGLIRSFSERFPEDGPELEEILTQLATADARFWKGPSEAPSGQA.

Residue Ala2 is modified to N-acetylalanine. His450 provides a ligand contact to Zn(2+). The active site involves Glu451. Zn(2+) is bound by residues His455 and Glu508.

It belongs to the peptidase M49 family. Requires Zn(2+) as cofactor. In terms of tissue distribution, detected in placenta (at protein level). Detected in erythrocytes (at protein level).

Its subcellular location is the cytoplasm. The protein localises to the cytosol. The catalysed reaction is Release of an N-terminal dipeptide from a peptide comprising four or more residues, with broad specificity. Also acts on dipeptidyl 2-naphthylamides.. With respect to regulation, activated by Co(2+). Inhibited by EDTA and o-phenanthroline (in vitro). In terms of biological role, cleaves and degrades bioactive peptides, including angiotensin, Leu-enkephalin and Met-enkephalin. Also cleaves Arg-Arg-beta-naphthylamide (in vitro). This chain is Dipeptidyl peptidase 3 (DPP3), found in Homo sapiens (Human).